Consider the following 1070-residue polypeptide: DNA-directed RNA polymerase subunit beta (1070 aa).

It belongs to the RNA polymerase beta chain family. As to quaternary structure, in plastids the minimal PEP RNA polymerase catalytic core is composed of four subunits: alpha, beta, beta', and beta''. When a (nuclear-encoded) sigma factor is associated with the core the holoenzyme is formed, which can initiate transcription.

Its subcellular location is the plastid. It localises to the chloroplast. It catalyses the reaction RNA(n) + a ribonucleoside 5'-triphosphate = RNA(n+1) + diphosphate. Its function is as follows. DNA-dependent RNA polymerase catalyzes the transcription of DNA into RNA using the four ribonucleoside triphosphates as substrates. The sequence is that of DNA-directed RNA polymerase subunit beta from Morus indica (Mulberry).